Reading from the N-terminus, the 221-residue chain is 7-cyano-7-deazaguanine synthase (221 aa).

10 to 20 is an ATP binding site; sequence FSGGQDSTTCL. Zn(2+) contacts are provided by Cys186, Cys195, Cys198, and Cys201.

Belongs to the QueC family. Homodimer. Zn(2+) serves as cofactor.

It catalyses the reaction 7-carboxy-7-deazaguanine + NH4(+) + ATP = 7-cyano-7-deazaguanine + ADP + phosphate + H2O + H(+). It functions in the pathway purine metabolism; 7-cyano-7-deazaguanine biosynthesis. Catalyzes the ATP-dependent conversion of 7-carboxy-7-deazaguanine (CDG) to 7-cyano-7-deazaguanine (preQ(0)). This chain is 7-cyano-7-deazaguanine synthase, found in Anoxybacillus flavithermus (strain DSM 21510 / WK1).